Here is a 5400-residue protein sequence, read N- to C-terminus: Midasin (5400 aa).

AAA-ATPase protomer stretches follow at residues 345–571 (MVSL…HGLP), 656–986 (LLEK…AIKA), 1050–1308 (SYVK…EKVV), 1347–1652 (SMRR…VNMA), 1769–2023 (VLRV…VLRI), and 2074–2347 (IRQN…MMGP). Residues 360–367 (GPSGSGKS), 674–681 (GETGTGKT), 1079–1086 (GPTSSGKT), 1369–1376 (GDTGGGKT), 1786–1793 (GSPGVGKT), and 2095–2102 (GPSSSGKT) each bind ATP. The tract at residues 2435 to 4569 (IYLSSLGVTD…DGVGAKDVSD (2135 aa)) is linker. Coiled-coil stretches lie at residues 2896–2916 (LERL…SEID), 3233–3253 (AMKI…LELN), and 3896–3916 (MEQL…VLKL). 3 disordered regions span residues 4540-4890 (EEDD…SSSN), 4905-4929 (TLTD…TKVN), and 4990-5069 (QVNT…RMDS). Basic and acidic residues predominate over residues 4576 to 4612 (QLHGTDKKEEEEKEQDDVLGKNKGIEMSDEFDGKEYS). Residues 4613–4631 (VSEDEEEDKEDEGSEDEPL) are compositionally biased toward acidic residues. Basic and acidic residues-rich tracts occupy residues 4641–4652 (DAEKADEKPWNK) and 4661–4687 (MNEK…KDDG). 2 stretches are compositionally biased toward acidic residues: residues 4688–4698 (VETADEPEESN) and 4706–4721 (GNDE…DTDN). Over residues 4722–4732 (LEEKIQTKEEA) the composition is skewed to basic and acidic residues. Residues 4740 to 4750 (VDNEQIDDDME) show a composition bias toward acidic residues. Basic and acidic residues predominate over residues 4751-4762 (MDKTEEVEKEDA). Acidic residues predominate over residues 4779–4798 (GENDQEETQEPSEENMEAEA). The segment covering 4799-4810 (EDRCGSPQKEEP) has biased composition (basic and acidic residues). Residues 4811 to 4822 (GNDLEQEPETEP) are compositionally biased toward acidic residues. Positions 4823 to 4834 (IEGKEVMSEDMM) are enriched in basic and acidic residues. Polar residues-rich tracts occupy residues 4839-4855 (RNDN…NPHG), 4864-4874 (TAPQENLSATD), 4916-4928 (PQNQ…QTKV), and 5030-5040 (SKPSISNSIAE). Residues 5157–5164 (MKKVIPYI) carry the Nuclear localization signal motif. The VWFA domain maps to 5186-5387 (QVVIAVDDSR…EALPRTLGDV (202 aa)). Residues 5271-5291 (VVNLLRNMNEMLENLASTRRQ) are a coiled coil.

This sequence belongs to the midasin family. Associates with pre-60S ribosomes in the nucleoplasm. Constitutively and ubiquitously expressed. Mostly observed in the shoot apex and root tip, and, to a lower extent, in mature seeds, seedling (excluding the hypocotyl), roots, stems, leaves and flowers.

It is found in the nucleus. The protein localises to the nucleolus. The protein resides in the nucleoplasm. In terms of biological role, nuclear chaperone required for maturation and nuclear export of pre-60S ribosome subunits. Functions at successive maturation steps to remove ribosomal factors at critical transition points, first driving the exit of early pre-60S particles from the nucleolus and then driving late pre-60S particles from the nucleus. Required for female gametophyte development. Involved in the expression regulation of genes related to plant growth and development. The protein is Midasin of Arabidopsis thaliana (Mouse-ear cress).